The following is a 328-amino-acid chain: Malate dehydrogenase (328 aa).

12–18 (GAAGQIG) is a binding site for NAD(+). Residues R95 and R101 each contribute to the substrate site. NAD(+) is bound by residues N108, Q115, and 132–134 (VGN). Substrate contacts are provided by N134 and R165. H190 acts as the Proton acceptor in catalysis.

Belongs to the LDH/MDH superfamily. MDH type 2 family.

It catalyses the reaction (S)-malate + NAD(+) = oxaloacetate + NADH + H(+). Its function is as follows. Catalyzes the reversible oxidation of malate to oxaloacetate. In Acidovorax ebreus (strain TPSY) (Diaphorobacter sp. (strain TPSY)), this protein is Malate dehydrogenase.